A 1562-amino-acid polypeptide reads, in one-letter code: Cell surface antigen I/II (1562 aa).

Residues 1-38 form the signal peptide; that stretch reads MKVKKTYGFRKSKISKTLCGAVLGTVAAVSVAGQKVFA. The segment covering 42 to 54 has biased composition (low complexity); the sequence is TTTSDVDTKVVGT. Residues 42–91 form a disordered region; the sequence is TTTSDVDTKVVGTQTGNPATNLPEAQGSASKEAEQSQNQAGETNGSIPVE. Positions 60 to 551 are helical; it reads ATNLPEAQGS…SKAKYDQKIL (492 aa). The segment covering 76 to 87 has biased composition (polar residues); it reads QSQNQAGETNGS. Ag I/II A repeat units lie at residues 147–221, 222–303, 304–385, and 386–467; these read KKTT…QKTN, AANQ…QEAN, AANE…KKAN, and AANE…QKDL. Disordered stretches follow at residues 824-973 and 1482-1509; these read VPKV…PTDP and SNTV…RTST. Pro residues predominate over residues 943–958; the sequence is PTPPTPTPDQPEPNKP. A compositionally biased stretch (low complexity) spans 1500–1509; the sequence is QDPSSPRTST. Positions 1529–1533 match the LPXTG sorting signal motif; that stretch reads LPNTG. T1532 carries the post-translational modification Pentaglycyl murein peptidoglycan amidated threonine. Residues 1533 to 1562 constitute a propeptide, removed by sortase; it reads GVTNNAYMPLLGIIGLVTSFSLLGLKAKKD.

The protein belongs to the antigen I/II family. Post-translationally, detected as a 185 kDa cell surface protein, but also as 2 proteins in S.mutans culture supernatants of about 150 kDa (antigen I) and 50 kDa (antigen II); antigen II is only seen after proteolysis. Antigen I and II have the same N-terminus but different C-termini.

Its subcellular location is the secreted. The protein resides in the cell wall. Surface protein antigen implicated in dental caries. The sequence is that of Cell surface antigen I/II from Streptococcus mutans serotype c (strain ATCC 700610 / UA159).